The sequence spans 110 residues: UPF0060 membrane protein Ping_0587 (110 aa).

4 helical membrane passes run 6 to 26 (IFGI…LPYL), 33 to 53 (SIWL…LLTL), 61 to 81 (TYAA…WLVE), and 87 to 107 (MTDL…MFGP).

It belongs to the UPF0060 family.

It localises to the cell inner membrane. The sequence is that of UPF0060 membrane protein Ping_0587 from Psychromonas ingrahamii (strain DSM 17664 / CCUG 51855 / 37).